Consider the following 33-residue polypeptide: U13-ctenitoxin-Pn1c (33 aa).

Disulfide bonds link Cys-3–Cys-17, Cys-10–Cys-21, and Cys-16–Cys-30.

As to expression, expressed by the venom gland.

The protein resides in the secreted. In terms of biological role, acts as a neurotoxin. The protein is U13-ctenitoxin-Pn1c of Phoneutria nigriventer (Brazilian armed spider).